A 189-amino-acid chain; its full sequence is Peptidyl-tRNA hydrolase (189 aa).

Tyrosine 15 contributes to the tRNA binding site. Histidine 20 acts as the Proton acceptor in catalysis. Phenylalanine 66, asparagine 68, and asparagine 114 together coordinate tRNA.

Belongs to the PTH family. Monomer.

It localises to the cytoplasm. It catalyses the reaction an N-acyl-L-alpha-aminoacyl-tRNA + H2O = an N-acyl-L-amino acid + a tRNA + H(+). In terms of biological role, hydrolyzes ribosome-free peptidyl-tRNAs (with 1 or more amino acids incorporated), which drop off the ribosome during protein synthesis, or as a result of ribosome stalling. Catalyzes the release of premature peptidyl moieties from peptidyl-tRNA molecules trapped in stalled 50S ribosomal subunits, and thus maintains levels of free tRNAs and 50S ribosomes. The polypeptide is Peptidyl-tRNA hydrolase (Streptococcus pneumoniae (strain JJA)).